Reading from the N-terminus, the 218-residue chain is C-type lectin domain family 2 member H (218 aa).

Residues 1 to 52 lie on the Cytoplasmic side of the membrane; the sequence is MNAAKVETSSMGMLQRADLTAADCLQEGEMGKKIQGKCFRIISTVSPVKLYC. The chain crosses the membrane as a helical; Signal-anchor for type II membrane protein span at residues 53 to 73; it reads CYGVIMVLTVAVIALSVALSV. Residues 74–218 are Extracellular-facing; it reads RNKIPAMEDR…SRVGSVPRHV (145 aa). Cys-90 and Cys-101 are disulfide-bonded. Residues 97 to 201 enclose the C-type lectin domain; the sequence is FGSKCFYFSE…SYTHRKWICS (105 aa). The N-linked (GlcNAc...) asparagine glycan is linked to Asn-110. Residues Cys-118 and Cys-200 are joined by a disulfide bond.

As to expression, detected in ileum, liver, kidney and in IL2-activated natural killer cells.

Its subcellular location is the cell membrane. In terms of biological role, lectin-type cell surface receptor. The protein is C-type lectin domain family 2 member H (Clec2h) of Mus musculus (Mouse).